The sequence spans 211 residues: Beta-crystallin B3 (211 aa).

N-acetylmethionine is present on Met-1. Residue Ala-2 is modified to N-acetylalanine; in Beta-crystallin B3, N-terminally processed. The segment at 2-23 (AEQHGAPEQAAAGKSHGGLGGS) is N-terminal arm. 2 Beta/gamma crystallin 'Greek key' domains span residues 24-63 (YKVTVYELENFQGKRCELSAECPNLTDSLLEKVGSIQVES) and 64-108 (GPWL…RPLH). A connecting peptide region spans residues 109–113 (IDGPD). 2 Beta/gamma crystallin 'Greek key' domains span residues 114-155 (HKLH…RVIN) and 156-198 (GTWV…RRIR). The interval 200–211 (QKWHKRGCFLSS) is C-terminal arm.

The protein belongs to the beta/gamma-crystallin family. Homo/heterodimer, or complexes of higher-order. The structure of beta-crystallin oligomers seems to be stabilized through interactions between the N-terminal arms.

In terms of biological role, crystallins are the dominant structural components of the vertebrate eye lens. The sequence is that of Beta-crystallin B3 (Crybb3) from Mus musculus (Mouse).